Consider the following 154-residue polypeptide: uncharacterized protein (154 aa).

The next 5 helical transmembrane spans lie at 5–24 (TLII…GVLL), 29–48 (FYAA…IYAA), 53–75 (PVVV…AIAA), 87–109 (IFWV…SMAV), and 124–146 (ATDY…LSAI).

The protein resides in the cell membrane. This is an uncharacterized protein from Archaeoglobus fulgidus (strain ATCC 49558 / DSM 4304 / JCM 9628 / NBRC 100126 / VC-16).